A 207-amino-acid polypeptide reads, in one-letter code: Ribosomal RNA small subunit methyltransferase G (207 aa).

S-adenosyl-L-methionine contacts are provided by residues glycine 75, methionine 80, 126-127 (VE), and arginine 141.

The protein belongs to the methyltransferase superfamily. RNA methyltransferase RsmG family.

The protein resides in the cytoplasm. The catalysed reaction is guanosine(527) in 16S rRNA + S-adenosyl-L-methionine = N(7)-methylguanosine(527) in 16S rRNA + S-adenosyl-L-homocysteine. Functionally, specifically methylates the N7 position of guanine in position 527 of 16S rRNA. The protein is Ribosomal RNA small subunit methyltransferase G of Laribacter hongkongensis (strain HLHK9).